Reading from the N-terminus, the 228-residue chain is 5'-methylthioadenosine/S-adenosylhomocysteine nucleosidase (228 aa).

E11 (proton acceptor) is an active-site residue. Residues G77, I151, and 172-173 contribute to the substrate site; that span reads ME. D196 acts as the Proton donor in catalysis.

This sequence belongs to the PNP/UDP phosphorylase family. MtnN subfamily.

It carries out the reaction S-adenosyl-L-homocysteine + H2O = S-(5-deoxy-D-ribos-5-yl)-L-homocysteine + adenine. The catalysed reaction is S-methyl-5'-thioadenosine + H2O = 5-(methylsulfanyl)-D-ribose + adenine. The enzyme catalyses 5'-deoxyadenosine + H2O = 5-deoxy-D-ribose + adenine. The protein operates within amino-acid biosynthesis; L-methionine biosynthesis via salvage pathway; S-methyl-5-thio-alpha-D-ribose 1-phosphate from S-methyl-5'-thioadenosine (hydrolase route): step 1/2. Its function is as follows. Catalyzes the irreversible cleavage of the glycosidic bond in both 5'-methylthioadenosine (MTA) and S-adenosylhomocysteine (SAH/AdoHcy) to adenine and the corresponding thioribose, 5'-methylthioribose and S-ribosylhomocysteine, respectively. Also cleaves 5'-deoxyadenosine, a toxic by-product of radical S-adenosylmethionine (SAM) enzymes, into 5-deoxyribose and adenine. The protein is 5'-methylthioadenosine/S-adenosylhomocysteine nucleosidase of Staphylococcus aureus (strain JH1).